The following is a 460-amino-acid chain: Serine--tRNA ligase (460 aa).

Residue 255-257 (TAE) participates in L-serine binding. ATP-binding positions include 286–288 (RKE) and valine 302. Residue glutamate 309 coordinates L-serine. 373 to 376 (EMVS) is an ATP binding site. Residue threonine 409 participates in L-serine binding.

The protein belongs to the class-II aminoacyl-tRNA synthetase family. Type-1 seryl-tRNA synthetase subfamily. In terms of assembly, homodimer. The tRNA molecule binds across the dimer.

The protein resides in the cytoplasm. The catalysed reaction is tRNA(Ser) + L-serine + ATP = L-seryl-tRNA(Ser) + AMP + diphosphate + H(+). The enzyme catalyses tRNA(Sec) + L-serine + ATP = L-seryl-tRNA(Sec) + AMP + diphosphate + H(+). Its pathway is aminoacyl-tRNA biosynthesis; selenocysteinyl-tRNA(Sec) biosynthesis; L-seryl-tRNA(Sec) from L-serine and tRNA(Sec): step 1/1. Functionally, catalyzes the attachment of serine to tRNA(Ser). Is also able to aminoacylate tRNA(Sec) with serine, to form the misacylated tRNA L-seryl-tRNA(Sec), which will be further converted into selenocysteinyl-tRNA(Sec). The chain is Serine--tRNA ligase from Aeropyrum pernix (strain ATCC 700893 / DSM 11879 / JCM 9820 / NBRC 100138 / K1).